The primary structure comprises 429 residues: Acetylornithine aminotransferase (429 aa).

Pyridoxal 5'-phosphate contacts are provided by residues 126-127 (GA) and Phe-160. Arg-163 is a N(2)-acetyl-L-ornithine binding site. Residue 251–254 (DEVQ) participates in pyridoxal 5'-phosphate binding. Lys-280 is modified (N6-(pyridoxal phosphate)lysine). Ser-307 provides a ligand contact to N(2)-acetyl-L-ornithine. Thr-308 contacts pyridoxal 5'-phosphate.

It belongs to the class-III pyridoxal-phosphate-dependent aminotransferase family. ArgD subfamily. Homodimer. The cofactor is pyridoxal 5'-phosphate.

It localises to the cytoplasm. The enzyme catalyses N(2)-acetyl-L-ornithine + 2-oxoglutarate = N-acetyl-L-glutamate 5-semialdehyde + L-glutamate. It participates in amino-acid biosynthesis; L-arginine biosynthesis; N(2)-acetyl-L-ornithine from L-glutamate: step 4/4. With respect to regulation, N-acetylornithine aminotransferase activity is stimulated by the addition of Mg(2+), Ca(2+) or Mn(2+), and inhibited by the addition of Zn(2+), Cu(2+), Co(2+) or Ni(2+). In terms of biological role, catalyzes the reversible conversion of N-acetylornithine to N-acetylglutamate-5-semialdehyde. In vitro, also shows very low ornithine aminotransferase (OAT) and gamma-aminobutyrate aminotransferase (GABA-AT) activity, catalyzing the conversion of ornithine (Orn) to glutamate-5-semialdehyde and of gamma-aminobutyric acid (GABA) to succinate semialdehyde. It has been shown to function as a GABA-AT and contributes to closing the tricarboxylic acid cycle of Synechocystis sp. PCC6803 via the GABA shunt. However, the catalytic efficiency toward N-acetylornithine is 2500-fold and 10700-fold higher than that toward ornithine and gamma-aminobutyrate, respectively, indicating that the protein mainly functions as an N-acetylornithine aminotransferase. The chain is Acetylornithine aminotransferase from Synechocystis sp. (strain ATCC 27184 / PCC 6803 / Kazusa).